Reading from the N-terminus, the 1260-residue chain is Agglutinin-like protein 1 (1260 aa).

The N-terminal stretch at 1–17 (MLQQFTLLFLYLSIASA) is a signal peptide. 4 disulfide bridges follow: Cys73/Cys150, Cys96/Cys112, Cys205/Cys298, and Cys227/Cys256. 3 ALS repeats span residues 365 to 396 (TTIT…VDVP), 401 to 432 (TTVT…VQVP), and 438 to 469 (VSTT…IREP). The N-linked (GlcNAc...) asparagine glycan is linked to Asn471. The ALS 4 repeat unit spans residues 474-505 (VTTTEYWSQSFATTTTVTAPPGETDTVIIREP). N-linked (GlcNAc...) asparagine glycosylation occurs at Asn507. The stretch at 510–541 (VTTTEYWSQSYATTTTVTAPPGGTDTVLIREP) is one ALS 5 repeat. N-linked (GlcNAc...) asparagine glycosylation is present at Asn543. The stretch at 546–577 (VTTTEYWSQSYATTTTVTAPPGGTDTVIIREP) is one ALS 6 repeat. N-linked (GlcNAc...) asparagine glycosylation occurs at Asn579. The ALS 7 repeat unit spans residues 582–613 (VTTTEYWSQSYATTTTITAPPGETDTVIIREP). N-linked (GlcNAc...) asparagine glycosylation occurs at Asn615. The stretch at 618-649 (VTTTEYWSQSYATTTTVTAPPGGTDTVLIREP) is one ALS 8 repeat. Asn651 is a glycosylation site (N-linked (GlcNAc...) asparagine). The stretch at 654-685 (VTTTEYWSQSYATTTTVTAPPGGTDTVLIREP) is one ALS 9 repeat. Asn687 is a glycosylation site (N-linked (GlcNAc...) asparagine). One copy of the ALS 10 repeat lies at 690-721 (VTTTEYWSQSYATTTTVTAPPGGTDTVIIREP). Asn723 carries N-linked (GlcNAc...) asparagine glycosylation. An ALS 11 repeat occupies 726–757 (VTTTEYWSQSYATTTTVTAPPGGTDTVIIREP). Asn759 is a glycosylation site (N-linked (GlcNAc...) asparagine). The ALS 12 repeat unit spans residues 762–791 (VTTTEYWSQSFATTTTVTAPPGGTDTVIIY). Asn820, Asn886, Asn918, and Asn973 each carry an N-linked (GlcNAc...) asparagine glycan. 2 stretches are compositionally biased toward polar residues: residues 896–918 (PTAS…SSDN) and 964–979 (KVTF…GTHD). Disordered stretches follow at residues 896 to 924 (PTAS…KSGV) and 954 to 1226 (SIPS…SSSP). Low complexity predominate over residues 980–995 (SQSTSTEIEIVTTSST). Polar residues predominate over residues 1002-1062 (VSSNTDLTSE…PTVATSTLAS (61 aa)). N-linked (GlcNAc...) asparagine glycans are attached at residues Asn1045 and Asn1068. Residues 1073 to 1090 (HESASTSLKPSMGENSGL) show a composition bias toward polar residues. Low complexity predominate over residues 1091–1110 (TTSTEIEATTTSPTEAPSPA). Residues 1111–1154 (VSSGTDVTTEPTDTREQPTTLSTTSKTNSESVATTQATNENGGK) show a composition bias toward polar residues. 2 stretches are compositionally biased toward low complexity: residues 1155 to 1176 (SPST…SANS) and 1197 to 1226 (SHST…SSSP). A lipid anchor (GPI-anchor amidated glycine) is attached at Gly1238. A propeptide spans 1239 to 1260 (SGSIIQHSTWLYGLITLLSLFI) (removed in mature form).

This sequence belongs to the ALS family. The GPI-anchor is attached to the protein in the endoplasmic reticulum and serves to target the protein to the cell surface. There, the glucosamine-inositol phospholipid moiety is cleaved off and the GPI-modified mannoprotein is covalently attached via its lipidless GPI glycan remnant to the 1,6-beta-glucan of the outer cell wall layer.

Its subcellular location is the cell membrane. The protein localises to the secreted. It is found in the cell wall. Major cell surface adhesion protein which mediates both yeast-to-host tissue adherence and yeast aggregation. Acts as a downstream effector of the EFG1 regulatory pathway. Required for rapamycin-induced aggregation of C.albicans. Binds glycans and mediates adherence to endothelial and epithelial cells, thereby playing an important role in the pathogenesis of C.albicans infections. This Candida albicans (strain SC5314 / ATCC MYA-2876) (Yeast) protein is Agglutinin-like protein 1 (ALS1).